The chain runs to 341 residues: Anthranilate phosphoribosyltransferase (341 aa).

Residues Gly-82, 85–86 (GD), Thr-90, 92–95 (NIST), 110–118 (KHGGRSVSS), and Ser-122 each bind 5-phospho-alpha-D-ribose 1-diphosphate. Residue Gly-82 participates in anthranilate binding. Mg(2+) is bound at residue Ser-94. Arg-168 contributes to the anthranilate binding site. Asp-227 and Glu-228 together coordinate Mg(2+).

This sequence belongs to the anthranilate phosphoribosyltransferase family. As to quaternary structure, homodimer. Mg(2+) is required as a cofactor.

It carries out the reaction N-(5-phospho-beta-D-ribosyl)anthranilate + diphosphate = 5-phospho-alpha-D-ribose 1-diphosphate + anthranilate. Its pathway is amino-acid biosynthesis; L-tryptophan biosynthesis; L-tryptophan from chorismate: step 2/5. Functionally, catalyzes the transfer of the phosphoribosyl group of 5-phosphorylribose-1-pyrophosphate (PRPP) to anthranilate to yield N-(5'-phosphoribosyl)-anthranilate (PRA). The protein is Anthranilate phosphoribosyltransferase of Nitrosomonas eutropha (strain DSM 101675 / C91 / Nm57).